The following is a 529-amino-acid chain: Peptide chain release factor 3 (529 aa).

The region spanning 11–280 is the tr-type G domain; sequence SKRRTFAIIS…GLTDWAPAPL (270 aa). GTP contacts are provided by residues 20–27, 88–92, and 142–145; these read SHPDAGKT, DTPGH, and NKLD.

It belongs to the TRAFAC class translation factor GTPase superfamily. Classic translation factor GTPase family. PrfC subfamily.

The protein localises to the cytoplasm. Functionally, increases the formation of ribosomal termination complexes and stimulates activities of RF-1 and RF-2. It binds guanine nucleotides and has strong preference for UGA stop codons. It may interact directly with the ribosome. The stimulation of RF-1 and RF-2 is significantly reduced by GTP and GDP, but not by GMP. This is Peptide chain release factor 3 from Vibrio vulnificus (strain YJ016).